A 108-amino-acid chain; its full sequence is Tetrahydromethanopterin S-methyltransferase subunit B (108 aa).

The chain crosses the membrane as a helical span at residues 79–99; sequence GMFFGFWVTMAILVLVTILAV.

It belongs to the MtrB family. As to quaternary structure, the complex is composed of 8 subunits; MtrA, MtrB, MtrC, MtrD, MtrE, MtrF, MtrG and MtrH.

Its subcellular location is the cell membrane. The enzyme catalyses 5-methyl-5,6,7,8-tetrahydromethanopterin + coenzyme M + 2 Na(+)(in) = 5,6,7,8-tetrahydromethanopterin + methyl-coenzyme M + 2 Na(+)(out). The protein operates within one-carbon metabolism; methanogenesis from CO(2); methyl-coenzyme M from 5,10-methylene-5,6,7,8-tetrahydromethanopterin: step 2/2. Functionally, part of a complex that catalyzes the formation of methyl-coenzyme M and tetrahydromethanopterin from coenzyme M and methyl-tetrahydromethanopterin. This is an energy-conserving, sodium-ion translocating step. The chain is Tetrahydromethanopterin S-methyltransferase subunit B from Methanococcus maripaludis (strain C5 / ATCC BAA-1333).